A 268-amino-acid chain; its full sequence is UPF0739 protein C1orf74 homolog (268 aa).

This sequence belongs to the UPF0739 family.

In Salmo salar (Atlantic salmon), this protein is UPF0739 protein C1orf74 homolog.